The following is a 243-amino-acid chain: Leucyl/phenylalanyl-tRNA--protein transferase (243 aa).

Belongs to the L/F-transferase family.

The protein localises to the cytoplasm. It catalyses the reaction N-terminal L-lysyl-[protein] + L-leucyl-tRNA(Leu) = N-terminal L-leucyl-L-lysyl-[protein] + tRNA(Leu) + H(+). The enzyme catalyses N-terminal L-arginyl-[protein] + L-leucyl-tRNA(Leu) = N-terminal L-leucyl-L-arginyl-[protein] + tRNA(Leu) + H(+). It carries out the reaction L-phenylalanyl-tRNA(Phe) + an N-terminal L-alpha-aminoacyl-[protein] = an N-terminal L-phenylalanyl-L-alpha-aminoacyl-[protein] + tRNA(Phe). Functionally, functions in the N-end rule pathway of protein degradation where it conjugates Leu, Phe and, less efficiently, Met from aminoacyl-tRNAs to the N-termini of proteins containing an N-terminal arginine or lysine. This Vibrio cholerae serotype O1 (strain ATCC 39541 / Classical Ogawa 395 / O395) protein is Leucyl/phenylalanyl-tRNA--protein transferase.